A 408-amino-acid chain; its full sequence is Multidrug resistance protein MdtG (408 aa).

11 helical membrane-spanning segments follow: residues 16–36 (LIVA…VMPF), 58–78 (IVFS…GGLA), 92–112 (LGMG…QFLI), 115–135 (ALLG…ATQV), 146–166 (TLST…GLLA), 173–193 (PVFF…LFCI), 224–244 (LFVT…ILTL), 256–276 (VAFI…LSAP), 290–310 (ILIT…YVQT), 319–339 (FLLG…LVYN), and 378–398 (AVFL…WNSL).

Belongs to the major facilitator superfamily. DHA1 family. MdtG (TC 2.A.1.2.20) subfamily.

It localises to the cell inner membrane. In terms of biological role, confers resistance to fosfomycin and deoxycholate. This Escherichia coli (strain 55989 / EAEC) protein is Multidrug resistance protein MdtG.